The primary structure comprises 436 residues: GTPase Der (436 aa).

EngA-type G domains lie at 4 to 167 and 176 to 351; these read PVVA…KDEE and IKLS…ENHK. GTP is bound by residues 10–17, 57–61, 119–122, 182–189, 229–233, and 294–297; these read GRPNVGKS, DTGGI, NKVD, DTAGM, and NKWD. The KH-like domain maps to 352 to 436; it reads KRVQSSTLNE…PIRIIPRKRN (85 aa).

The protein belongs to the TRAFAC class TrmE-Era-EngA-EngB-Septin-like GTPase superfamily. EngA (Der) GTPase family. Associates with the 50S ribosomal subunit.

In terms of biological role, GTPase that plays an essential role in the late steps of ribosome biogenesis. In Staphylococcus carnosus (strain TM300), this protein is GTPase Der.